Here is a 266-residue protein sequence, read N- to C-terminus: Phosphatidylglycerol--prolipoprotein diacylglyceryl transferase (266 aa).

7 helical membrane passes run 19–39, 61–81, 91–111, 125–145, 176–196, 204–224, and 237–257; these read IWGP…FAFA, LMFW…TLFY, LYLF…LGVI, FLQV…FGRI, PSQL…ILWF, GAVS…VEFF, and GMSM…ILMV. Position 144 (Arg-144) interacts with a 1,2-diacyl-sn-glycero-3-phospho-(1'-sn-glycerol).

It belongs to the Lgt family.

The protein resides in the cell inner membrane. It catalyses the reaction L-cysteinyl-[prolipoprotein] + a 1,2-diacyl-sn-glycero-3-phospho-(1'-sn-glycerol) = an S-1,2-diacyl-sn-glyceryl-L-cysteinyl-[prolipoprotein] + sn-glycerol 1-phosphate + H(+). Its pathway is protein modification; lipoprotein biosynthesis (diacylglyceryl transfer). Catalyzes the transfer of the diacylglyceryl group from phosphatidylglycerol to the sulfhydryl group of the N-terminal cysteine of a prolipoprotein, the first step in the formation of mature lipoproteins. This chain is Phosphatidylglycerol--prolipoprotein diacylglyceryl transferase, found in Idiomarina loihiensis (strain ATCC BAA-735 / DSM 15497 / L2-TR).